We begin with the raw amino-acid sequence, 778 residues long: Tastin (778 aa).

Residues 1–11 (MTTRQATKDPL) show a composition bias toward basic and acidic residues. The interval 1–115 (MTTRQATKDP…PGPPAQTEAP (115 aa)) is disordered. 3 positions are modified to phosphoserine: S16, S98, and S170. The interval 212–244 (ISPSGPSFHPSTRPSFQELRRETAGSSRTSVSQ) is disordered. The span at 235–244 (AGSSRTSVSQ) shows a compositional bias: polar residues. Phosphoserine is present on residues S324, S334, S344, and S362. At T363 the chain carries Phosphothreonine. S376 is subject to Phosphoserine. Disordered stretches follow at residues 406–425 (EGSG…NRTP), 508–587 (ECGE…AEPR), and 600–641 (PESS…RVEL). The segment covering 513 to 523 (QPCPPAEPGPP) has biased composition (pro residues). 4 tandem repeats follow at residues 516–548 (PPAE…PEPY), 549–581 (PPAE…PEPC), 582–614 (PPAE…PEPC), and 615–647 (PPAE…SEPC). The tract at residues 516 to 647 (PPAEPGPPEA…RVELGASEPC (132 aa)) is 4 X 33 AA approximate tandem repeats. Residues 560–574 (CRSEPEIPESSRQEQ) show a composition bias toward basic and acidic residues. Residues 612–622 (EPCPPAEPGPL) show a composition bias toward pro residues.

As to quaternary structure, directly binds bystin, and indirectly trophinin. Strong expression at implantation sites. Was exclusively localized to the apical side of the syncytiotrophoblast. Also found in macrophages.

It localises to the cytoplasm. In terms of biological role, could be involved with bystin and trophinin in a cell adhesion molecule complex that mediates an initial attachment of the blastocyst to uterine epithelial cells at the time of the embryo implantation. The protein is Tastin (TROAP) of Homo sapiens (Human).